Here is a 205-residue protein sequence, read N- to C-terminus: Dephospho-CoA kinase (205 aa).

The DPCK domain maps to 15 to 205; the sequence is VIGLTGGIAT…VERALDQASI (191 aa). 23-28 lines the ATP pocket; it reads ATGKST.

The protein belongs to the CoaE family.

The protein localises to the cytoplasm. The catalysed reaction is 3'-dephospho-CoA + ATP = ADP + CoA + H(+). It participates in cofactor biosynthesis; coenzyme A biosynthesis; CoA from (R)-pantothenate: step 5/5. In terms of biological role, catalyzes the phosphorylation of the 3'-hydroxyl group of dephosphocoenzyme A to form coenzyme A. This chain is Dephospho-CoA kinase, found in Gloeobacter violaceus (strain ATCC 29082 / PCC 7421).